The sequence spans 358 residues: MVEITEVIEPEWQTRNDIQNLVNQKTLQWVFVGGKGGVGKTTISSSIATALAETRESVLLLSTDPAHSLSDAFGQKFTHEPRLVNGFTNLYAMELNTSQIIDGLDGLRETHSFLKNVPDILMMLPGIDEALSFVELMQSVQSRRFSVTIFDTAPTGHTLKFLKLPDVLEKILDSLLKLENTMGGLLQLFSSMTKAQMSQNELFDKIKLLGDMINTTHEQMKNPDLTTFICVCIPEFLSVYETERLIQDLAKSEIDCSYIIVNQVLKHIQLGGLIEDAWDGLTEEQQRIMTPFFEKVREHHSTHNSRVDVQRKYLSDIKDLYQEDFNIVAVHQNKQEVRGKDALVAFAKKLMQHSPLPI.

35-42 (KGGVGKTT) contacts ATP. Residue aspartate 64 is part of the active site. Glutamate 235 and asparagine 262 together coordinate ATP.

The protein belongs to the arsA ATPase family. In terms of assembly, homodimer.

It localises to the cytoplasm. Its subcellular location is the endoplasmic reticulum. In terms of biological role, ATPase required for the post-translational delivery of tail-anchored (TA) proteins to the endoplasmic reticulum. Recognizes and selectively binds the transmembrane domain of TA proteins in the cytosol. This complex then targets to the endoplasmic reticulum by membrane-bound receptors, where the tail-anchored protein is released for insertion. This process is regulated by ATP binding and hydrolysis. ATP binding drives the homodimer towards the closed dimer state, facilitating recognition of newly synthesized TA membrane proteins. ATP hydrolysis is required for insertion. Subsequently, the homodimer reverts towards the open dimer state, lowering its affinity for the membrane-bound receptor, and returning it to the cytosol to initiate a new round of targeting. This Babesia bovis protein is ATPase ASNA1 homolog.